The sequence spans 180 residues: Ribulose bisphosphate carboxylase small subunit, chloroplastic 1 (180 aa).

The N-terminal 56 residues, 1–56, are a transit peptide targeting the chloroplast; it reads MASSVLSSAAVATRSNVAQANMVAPFTGLKSAASFPVSRKQNLDITSIASNGGRVQ.

The protein belongs to the RuBisCO small chain family. In terms of assembly, heterohexadecamer of 8 large and 8 small subunits.

The protein localises to the plastid. It localises to the chloroplast. RuBisCO catalyzes two reactions: the carboxylation of D-ribulose 1,5-bisphosphate, the primary event in carbon dioxide fixation, as well as the oxidative fragmentation of the pentose substrate. Both reactions occur simultaneously and in competition at the same active site. Although the small subunit is not catalytic it is essential for maximal activity. The chain is Ribulose bisphosphate carboxylase small subunit, chloroplastic 1 from Nicotiana sylvestris (Wood tobacco).